The primary structure comprises 122 residues: Large ribosomal subunit protein uL14 (122 aa).

The protein belongs to the universal ribosomal protein uL14 family. As to quaternary structure, part of the 50S ribosomal subunit. Forms a cluster with proteins L3 and L19. In the 70S ribosome, L14 and L19 interact and together make contacts with the 16S rRNA in bridges B5 and B8.

Binds to 23S rRNA. Forms part of two intersubunit bridges in the 70S ribosome. The sequence is that of Large ribosomal subunit protein uL14 from Pseudomonas aeruginosa (strain LESB58).